A 238-amino-acid polypeptide reads, in one-letter code: Large ribosomal subunit protein uL1 (238 aa).

It belongs to the universal ribosomal protein uL1 family. Part of the 50S ribosomal subunit.

Its function is as follows. Binds directly to 23S rRNA. The L1 stalk is quite mobile in the ribosome, and is involved in E site tRNA release. Functionally, protein L1 is also a translational repressor protein, it controls the translation of the L11 operon by binding to its mRNA. In Gloeobacter violaceus (strain ATCC 29082 / PCC 7421), this protein is Large ribosomal subunit protein uL1.